A 356-amino-acid polypeptide reads, in one-letter code: Phosphoribosylformylglycinamidine cyclo-ligase (356 aa).

It belongs to the AIR synthase family.

The protein resides in the cytoplasm. The enzyme catalyses 2-formamido-N(1)-(5-O-phospho-beta-D-ribosyl)acetamidine + ATP = 5-amino-1-(5-phospho-beta-D-ribosyl)imidazole + ADP + phosphate + H(+). The protein operates within purine metabolism; IMP biosynthesis via de novo pathway; 5-amino-1-(5-phospho-D-ribosyl)imidazole from N(2)-formyl-N(1)-(5-phospho-D-ribosyl)glycinamide: step 2/2. The protein is Phosphoribosylformylglycinamidine cyclo-ligase of Acinetobacter baylyi (strain ATCC 33305 / BD413 / ADP1).